The sequence spans 271 residues: Thiazole synthase (271 aa).

The active-site Schiff-base intermediate with DXP is the Lys-104. Residues Gly-165, 192–193 (AG), and 214–215 (NT) contribute to the 1-deoxy-D-xylulose 5-phosphate site.

It belongs to the ThiG family. In terms of assembly, homotetramer. Forms heterodimers with either ThiH or ThiS.

Its subcellular location is the cytoplasm. It carries out the reaction [ThiS sulfur-carrier protein]-C-terminal-Gly-aminoethanethioate + 2-iminoacetate + 1-deoxy-D-xylulose 5-phosphate = [ThiS sulfur-carrier protein]-C-terminal Gly-Gly + 2-[(2R,5Z)-2-carboxy-4-methylthiazol-5(2H)-ylidene]ethyl phosphate + 2 H2O + H(+). It functions in the pathway cofactor biosynthesis; thiamine diphosphate biosynthesis. In terms of biological role, catalyzes the rearrangement of 1-deoxy-D-xylulose 5-phosphate (DXP) to produce the thiazole phosphate moiety of thiamine. Sulfur is provided by the thiocarboxylate moiety of the carrier protein ThiS. In vitro, sulfur can be provided by H(2)S. The polypeptide is Thiazole synthase (Burkholderia mallei (strain ATCC 23344)).